The following is a 307-amino-acid chain: Aspartate carbamoyltransferase catalytic subunit (307 aa).

Carbamoyl phosphate is bound by residues arginine 59 and threonine 60. Residue lysine 87 participates in L-aspartate binding. Carbamoyl phosphate contacts are provided by arginine 109, histidine 137, and glutamine 140. Positions 173 and 223 each coordinate L-aspartate. Residues glycine 266 and proline 267 each coordinate carbamoyl phosphate.

The protein belongs to the aspartate/ornithine carbamoyltransferase superfamily. ATCase family. Heterododecamer (2C3:3R2) of six catalytic PyrB chains organized as two trimers (C3), and six regulatory PyrI chains organized as three dimers (R2).

It carries out the reaction carbamoyl phosphate + L-aspartate = N-carbamoyl-L-aspartate + phosphate + H(+). It participates in pyrimidine metabolism; UMP biosynthesis via de novo pathway; (S)-dihydroorotate from bicarbonate: step 2/3. In terms of biological role, catalyzes the condensation of carbamoyl phosphate and aspartate to form carbamoyl aspartate and inorganic phosphate, the committed step in the de novo pyrimidine nucleotide biosynthesis pathway. The chain is Aspartate carbamoyltransferase catalytic subunit from Helicobacter pylori (strain HPAG1).